Reading from the N-terminus, the 362-residue chain is tRNA-specific 2-thiouridylase MnmA 1 (362 aa).

Residues 12–19 and Met-38 contribute to the ATP site; that span reads GMSGGVDS. Cys-104 acts as the Nucleophile in catalysis. Cys-104 and Cys-200 are disulfide-bonded. Gly-128 contributes to the ATP binding site. Residues 150–152 form an interaction with tRNA region; that stretch reads KDQ. Cys-200 acts as the Cysteine persulfide intermediate in catalysis. Residues 306–307 are interaction with tRNA; it reads RY.

This sequence belongs to the MnmA/TRMU family.

Its subcellular location is the cytoplasm. It carries out the reaction S-sulfanyl-L-cysteinyl-[protein] + uridine(34) in tRNA + AH2 + ATP = 2-thiouridine(34) in tRNA + L-cysteinyl-[protein] + A + AMP + diphosphate + H(+). Its function is as follows. Catalyzes the 2-thiolation of uridine at the wobble position (U34) of tRNA, leading to the formation of s(2)U34. The polypeptide is tRNA-specific 2-thiouridylase MnmA 1 (Clostridium tetani (strain Massachusetts / E88)).